The primary structure comprises 93 residues: Small ribosomal subunit protein uS19 (93 aa).

Belongs to the universal ribosomal protein uS19 family.

Its function is as follows. Protein S19 forms a complex with S13 that binds strongly to the 16S ribosomal RNA. This is Small ribosomal subunit protein uS19 from Leifsonia xyli subsp. xyli (strain CTCB07).